The primary structure comprises 465 residues: Fusarisetin A cluster transcription factor fsa5 (465 aa).

The zn(2)-C6 fungal-type DNA-binding region spans 13–47; that stretch reads CDRCRSHKLKCTVAPENTRSGSSRCTRCIRAQVTC. The interval 58–88 is disordered; it reads STNVKKADLRSGTNGQETTSMQASTIVPGSP. Residues 68–84 are compositionally biased toward polar residues; the sequence is SGTNGQETTSMQASTIV.

It is found in the nucleus. In terms of biological role, transcription activator that specifically regulates the expression of the gene cluster that mediates the biosynthesis of fusarisetin A. The sequence is that of Fusarisetin A cluster transcription factor fsa5 from Fusarium sp. (strain FN080326).